Reading from the N-terminus, the 175-residue chain is NADH-ubiquinone oxidoreductase chain 6 (175 aa).

A run of 5 helical transmembrane segments spans residues 1–21 (MMTYIVFILSIIFVISFVGFS), 25–45 (SPIYGGLVLIISGAVGCGIVL), 47–67 (FGGSFLGLMVFLIYLGGMLVV), 88–108 (AVLGAFVMGLLSELLLACYIL), and 149–169 (YGTWLVIVTGWSLFIGVLVIM).

Belongs to the complex I subunit 6 family. In terms of assembly, core subunit of respiratory chain NADH dehydrogenase (Complex I) which is composed of 45 different subunits.

Its subcellular location is the mitochondrion inner membrane. The enzyme catalyses a ubiquinone + NADH + 5 H(+)(in) = a ubiquinol + NAD(+) + 4 H(+)(out). Its function is as follows. Core subunit of the mitochondrial membrane respiratory chain NADH dehydrogenase (Complex I) which catalyzes electron transfer from NADH through the respiratory chain, using ubiquinone as an electron acceptor. Essential for the catalytic activity and assembly of complex I. This Halichoerus grypus (Gray seal) protein is NADH-ubiquinone oxidoreductase chain 6 (MT-ND6).